The sequence spans 440 residues: Thymidine phosphorylase (440 aa).

It belongs to the thymidine/pyrimidine-nucleoside phosphorylase family. Homodimer.

The enzyme catalyses thymidine + phosphate = 2-deoxy-alpha-D-ribose 1-phosphate + thymine. The protein operates within pyrimidine metabolism; dTMP biosynthesis via salvage pathway; dTMP from thymine: step 1/2. The enzymes which catalyze the reversible phosphorolysis of pyrimidine nucleosides are involved in the degradation of these compounds and in their utilization as carbon and energy sources, or in the rescue of pyrimidine bases for nucleotide synthesis. The sequence is that of Thymidine phosphorylase from Salmonella schwarzengrund (strain CVM19633).